The sequence spans 242 residues: 2-C-methyl-D-erythritol 4-phosphate cytidylyltransferase (242 aa).

This sequence belongs to the IspD/TarI cytidylyltransferase family. IspD subfamily.

It carries out the reaction 2-C-methyl-D-erythritol 4-phosphate + CTP + H(+) = 4-CDP-2-C-methyl-D-erythritol + diphosphate. It functions in the pathway isoprenoid biosynthesis; isopentenyl diphosphate biosynthesis via DXP pathway; isopentenyl diphosphate from 1-deoxy-D-xylulose 5-phosphate: step 2/6. In terms of biological role, catalyzes the formation of 4-diphosphocytidyl-2-C-methyl-D-erythritol from CTP and 2-C-methyl-D-erythritol 4-phosphate (MEP). In Shewanella loihica (strain ATCC BAA-1088 / PV-4), this protein is 2-C-methyl-D-erythritol 4-phosphate cytidylyltransferase.